The sequence spans 650 residues: Macrolide export ATP-binding/permease protein MacB (650 aa).

An ABC transporter domain is found at 9 to 248; that stretch reads IELIDLERVF…RPLGRPPGGA (240 aa). Residue 45 to 52 coordinates ATP; sequence GQSGSGKS. 4 helical membrane-spanning segments follow: residues 276 to 296, 525 to 545, 580 to 600, and 615 to 635; these read ALTL…MAIG, LTLL…IGVM, AVAV…GAAL, and PPIV…YLPA.

The protein belongs to the ABC transporter superfamily. Macrolide exporter (TC 3.A.1.122) family. Homodimer.

The protein resides in the cell inner membrane. Functionally, non-canonical ABC transporter that contains transmembrane domains (TMD), which form a pore in the inner membrane, and an ATP-binding domain (NBD), which is responsible for energy generation. Confers resistance against macrolides. The protein is Macrolide export ATP-binding/permease protein MacB of Rhodospirillum rubrum (strain ATCC 11170 / ATH 1.1.1 / DSM 467 / LMG 4362 / NCIMB 8255 / S1).